The chain runs to 284 residues: Four and a half LIM domains protein 5 (284 aa).

The segment at Cys-8–Cys-32 adopts a C4-type zinc-finger fold. LIM zinc-binding domains follow at residues Asn-39–Ser-100, Lys-101–Ala-160, His-161–Lys-220, and Ala-223–Asp-283.

In terms of assembly, interacts with CREM (via the third LIM domain). Interacts (via second LIM domain) with SPAG8.

Its subcellular location is the nucleus. May be involved in the regulation of spermatogenesis. Stimulates CREM transcriptional activity in a phosphorylation-independent manner. The chain is Four and a half LIM domains protein 5 (FHL5) from Bos taurus (Bovine).